The sequence spans 413 residues: Palmitoyl-acyl carrier protein thioesterase, chloroplastic (413 aa).

A chloroplast-targeting transit peptide spans 1–57 (MVATAVTSAFFPVTSSPDSSDSKNKKLGSIKSKPSVSSGSLQVKANAQAPPKINGTV). A disordered region spans residues 12 to 79 (PVTSSPDSSD…DGASSPPPRT (68 aa)). Residues 29 to 40 (SIKSKPSVSSGS) show a composition bias toward low complexity. Active-site residues include Asn-310, His-312, and Cys-347. A disordered region spans residues 394-413 (WRPKHAKSSANMDQITAKRA).

The protein belongs to the acyl-ACP thioesterase family.

It localises to the plastid. It is found in the chloroplast. The enzyme catalyses hexadecanoyl-[ACP] + H2O = hexadecanoate + holo-[ACP] + H(+). Its function is as follows. Plays an essential role in chain termination during de novo fatty acid synthesis. High thioesterase activity for palmitoyl-ACP versus other acyl-ACPs. The chain is Palmitoyl-acyl carrier protein thioesterase, chloroplastic (FATB1) from Gossypium hirsutum (Upland cotton).